The sequence spans 571 residues: MDKNEIILKLKNTSTSPGVYLWKDAKQNVLYVGKAKNLRKRLLQYFDGAINSYKTSKLMSLVADFEVYICKTNKEALLLEKAMVDRFNPEFNILLLDDRKYPYLKVQLLKDSLLITLSRKVNTKYTKNTLYYGPFPSGYGAKPILKLLQHEALYESGLLIKNNDSSFWVNQFAKIKEILSFKNNNYLNELTNKMHTAANNMQFELALFLRDGLTYLKKLKESQIIELSQYKNIDVFAYKTDEKLIYATVLFYRYGVLINKVNLTIPLGISIDESIRVFFEQFYADKILPDNFIVQEEILKYDLNLSSDYKFISPKIGTNKKVLDLALLNLNDYYEKEHLIMQNQLEKADSMLSSLNKYLNLPKLKNIVIFDNSNINNINPVGVAIVYTNGIKNKSLYRKFNLEALSYRSADVDYIRQSITKFFSSDKNTKDFDLIITDGGLQQVNEAKKTLKVLGINIPVIGLVKNEYHKTRALIDLNLNEIYVNDLELHNYLAQIQIEVDRFAKSHFRNRQKISSLEGKLRNIKGLGHNMEQKLLNHFKSYAKIYDASVEELAKIVPFNVAKSIKNKDYE.

The GIY-YIG domain occupies 15 to 93 (TSPGVYLWKD…VDRFNPEFNI (79 aa)). In terms of domain architecture, UVR spans 184–219 (NNYLNELTNKMHTAANNMQFELALFLRDGLTYLKKL).

Belongs to the UvrC family. In terms of assembly, interacts with UvrB in an incision complex.

It localises to the cytoplasm. Its function is as follows. The UvrABC repair system catalyzes the recognition and processing of DNA lesions. UvrC both incises the 5' and 3' sides of the lesion. The N-terminal half is responsible for the 3' incision and the C-terminal half is responsible for the 5' incision. This is UvrABC system protein C from Mycoplasmopsis agalactiae (strain NCTC 10123 / CIP 59.7 / PG2) (Mycoplasma agalactiae).